Reading from the N-terminus, the 138-residue chain is Basic phospholipase A2 PLA-B' (138 aa).

An N-terminal signal peptide occupies residues 1-16 (MRTLWITAVLLVGVEG). 7 disulfide bridges follow: cysteine 42–cysteine 131, cysteine 44–cysteine 60, cysteine 59–cysteine 111, cysteine 65–cysteine 138, cysteine 66–cysteine 104, cysteine 73–cysteine 97, and cysteine 91–cysteine 102. 3 residues coordinate Ca(2+): tyrosine 43, glycine 45, and glycine 47. The active site involves histidine 63. Aspartate 64 provides a ligand contact to Ca(2+). Aspartate 105 is a catalytic residue.

It belongs to the phospholipase A2 family. Group II subfamily. D49 sub-subfamily. It depends on Ca(2+) as a cofactor. As to expression, expressed by the venom gland.

Its subcellular location is the secreted. It catalyses the reaction a 1,2-diacyl-sn-glycero-3-phosphocholine + H2O = a 1-acyl-sn-glycero-3-phosphocholine + a fatty acid + H(+). Its function is as follows. PLA2 catalyzes the calcium-dependent hydrolysis of the 2-acyl groups in 3-sn-phosphoglycerides. In Protobothrops flavoviridis (Habu), this protein is Basic phospholipase A2 PLA-B'.